A 335-amino-acid chain; its full sequence is Holliday junction branch migration complex subunit RuvB (335 aa).

Residues Ala2–Tyr184 form a large ATPase domain (RuvB-L) region. Residues Leu23, Arg24, Gly65, Lys68, Thr69, Thr70, Glu131–Phe133, Arg174, Tyr184, and Arg221 contribute to the ATP site. Thr69 is a Mg(2+) binding site. The segment at Thr185–Gln255 is small ATPAse domain (RuvB-S). A head domain (RuvB-H) region spans residues Ile258–Lys335. Residues Arg313 and Arg318 each coordinate DNA.

It belongs to the RuvB family. In terms of assembly, homohexamer. Forms an RuvA(8)-RuvB(12)-Holliday junction (HJ) complex. HJ DNA is sandwiched between 2 RuvA tetramers; dsDNA enters through RuvA and exits via RuvB. An RuvB hexamer assembles on each DNA strand where it exits the tetramer. Each RuvB hexamer is contacted by two RuvA subunits (via domain III) on 2 adjacent RuvB subunits; this complex drives branch migration. In the full resolvosome a probable DNA-RuvA(4)-RuvB(12)-RuvC(2) complex forms which resolves the HJ.

The protein resides in the cytoplasm. It carries out the reaction ATP + H2O = ADP + phosphate + H(+). Functionally, the RuvA-RuvB-RuvC complex processes Holliday junction (HJ) DNA during genetic recombination and DNA repair, while the RuvA-RuvB complex plays an important role in the rescue of blocked DNA replication forks via replication fork reversal (RFR). RuvA specifically binds to HJ cruciform DNA, conferring on it an open structure. The RuvB hexamer acts as an ATP-dependent pump, pulling dsDNA into and through the RuvAB complex. RuvB forms 2 homohexamers on either side of HJ DNA bound by 1 or 2 RuvA tetramers; 4 subunits per hexamer contact DNA at a time. Coordinated motions by a converter formed by DNA-disengaged RuvB subunits stimulates ATP hydrolysis and nucleotide exchange. Immobilization of the converter enables RuvB to convert the ATP-contained energy into a lever motion, pulling 2 nucleotides of DNA out of the RuvA tetramer per ATP hydrolyzed, thus driving DNA branch migration. The RuvB motors rotate together with the DNA substrate, which together with the progressing nucleotide cycle form the mechanistic basis for DNA recombination by continuous HJ branch migration. Branch migration allows RuvC to scan DNA until it finds its consensus sequence, where it cleaves and resolves cruciform DNA. The chain is Holliday junction branch migration complex subunit RuvB from Latilactobacillus sakei subsp. sakei (strain 23K) (Lactobacillus sakei subsp. sakei).